We begin with the raw amino-acid sequence, 132 residues long: Two-component response regulator ORR42 (132 aa).

A Response regulatory domain is found at 11 to 125 (RALLVEDIKV…LEHILQETRS (115 aa)). The residue at position 61 (aspartate 61) is a 4-aspartylphosphate.

Belongs to the ARR family. Type-C subfamily. Two-component system major event consists of a His-to-Asp phosphorelay between a sensor histidine kinase (HK) and a response regulator (RR). In plants, the His-to-Asp phosphorelay involves an additional intermediate named Histidine-containing phosphotransfer protein (HPt). This multistep phosphorelay consists of a His-Asp-His-Asp sequential transfer of a phosphate group between first a His and an Asp of the HK protein, followed by the transfer to a conserved His of the HPt protein and finally the transfer to an Asp in the receiver domain of the RR protein.

Its function is as follows. Functions as a response regulator involved in His-to-Asp phosphorelay signal transduction system. Phosphorylation of the Asp residue in the receiver domain activates the ability of the protein to promote the transcription of target genes. May directly activate some type-A response regulators in response to cytokinins. This is Two-component response regulator ORR42 from Oryza sativa subsp. japonica (Rice).